Consider the following 236-residue polypeptide: 2-C-methyl-D-erythritol 4-phosphate cytidylyltransferase (236 aa).

It belongs to the IspD/TarI cytidylyltransferase family. IspD subfamily.

It carries out the reaction 2-C-methyl-D-erythritol 4-phosphate + CTP + H(+) = 4-CDP-2-C-methyl-D-erythritol + diphosphate. It participates in isoprenoid biosynthesis; isopentenyl diphosphate biosynthesis via DXP pathway; isopentenyl diphosphate from 1-deoxy-D-xylulose 5-phosphate: step 2/6. Catalyzes the formation of 4-diphosphocytidyl-2-C-methyl-D-erythritol from CTP and 2-C-methyl-D-erythritol 4-phosphate (MEP). The protein is 2-C-methyl-D-erythritol 4-phosphate cytidylyltransferase of Burkholderia thailandensis (strain ATCC 700388 / DSM 13276 / CCUG 48851 / CIP 106301 / E264).